We begin with the raw amino-acid sequence, 159 residues long: RNA pyrophosphohydrolase (159 aa).

Residues 6–149 (GFRPNVGIIL…KREVYRRALK (144 aa)) enclose the Nudix hydrolase domain. The Nudix box motif lies at 38–59 (GGINARETPEEALFRELNEEVG).

The protein belongs to the Nudix hydrolase family. RppH subfamily. The cofactor is a divalent metal cation.

Accelerates the degradation of transcripts by removing pyrophosphate from the 5'-end of triphosphorylated RNA, leading to a more labile monophosphorylated state that can stimulate subsequent ribonuclease cleavage. This is RNA pyrophosphohydrolase from Stutzerimonas stutzeri (strain A1501) (Pseudomonas stutzeri).